We begin with the raw amino-acid sequence, 241 residues long: Triosephosphate isomerase (241 aa).

Residue 9–11 (NWK) participates in substrate binding. His96 functions as the Electrophile in the catalytic mechanism. The active-site Proton acceptor is Glu165. Substrate-binding positions include Gly171, Ser204, and 225 to 226 (GG).

It belongs to the triosephosphate isomerase family. Homodimer.

It localises to the cytoplasm. It carries out the reaction D-glyceraldehyde 3-phosphate = dihydroxyacetone phosphate. It participates in carbohydrate biosynthesis; gluconeogenesis. Its pathway is carbohydrate degradation; glycolysis; D-glyceraldehyde 3-phosphate from glycerone phosphate: step 1/1. In terms of biological role, involved in the gluconeogenesis. Catalyzes stereospecifically the conversion of dihydroxyacetone phosphate (DHAP) to D-glyceraldehyde-3-phosphate (G3P). The sequence is that of Triosephosphate isomerase from Trichormus variabilis (strain ATCC 29413 / PCC 7937) (Anabaena variabilis).